Reading from the N-terminus, the 257-residue chain is 5'-nucleotidase SurE (257 aa).

Residues D15, D16, S46, and N99 each contribute to the a divalent metal cation site.

This sequence belongs to the SurE nucleotidase family. The cofactor is a divalent metal cation.

Its subcellular location is the cytoplasm. It carries out the reaction a ribonucleoside 5'-phosphate + H2O = a ribonucleoside + phosphate. In terms of biological role, nucleotidase that shows phosphatase activity on nucleoside 5'-monophosphates. In Aliivibrio fischeri (strain ATCC 700601 / ES114) (Vibrio fischeri), this protein is 5'-nucleotidase SurE.